A 309-amino-acid chain; its full sequence is Coproporphyrin III ferrochelatase (309 aa).

Fe-coproporphyrin III is bound by residues Y12, R29, 45 to 46 (RY), S53, and Y124. Positions 182 and 263 each coordinate Fe(2+).

The protein belongs to the ferrochelatase family.

It is found in the cytoplasm. It catalyses the reaction Fe-coproporphyrin III + 2 H(+) = coproporphyrin III + Fe(2+). Its pathway is porphyrin-containing compound metabolism; protoheme biosynthesis. Functionally, involved in coproporphyrin-dependent heme b biosynthesis. Catalyzes the insertion of ferrous iron into coproporphyrin III to form Fe-coproporphyrin III. This chain is Coproporphyrin III ferrochelatase, found in Listeria monocytogenes serotype 4b (strain F2365).